The sequence spans 149 residues: MAKLTILIALVAALVLVVHTSAFRSSEQSCKRQLQQVNLRHCENHIDQRIQQQQEEEEDRARKLRGIKHVILRHKSSQESEELDQCCEQLNELNSQRCQCRALQQIYESQSEQCEGRQQEQQLEGELEKLPRICGFGPLRRCNINPDEE.

Residues 1–22 (MAKLTILIALVAALVLVVHTSA) form the signal peptide. 4 cysteine pairs are disulfide-bonded: C30-C98, C42-C86, C87-C134, and C100-C142.

This sequence belongs to the 2S seed storage albumins family. Heterodimer of a small chain and a large chain; disulfide-linked.

The protein resides in the endoplasmic reticulum. The protein is Conglutin delta 3 of Lupinus angustifolius (Narrow-leaved blue lupine).